A 643-amino-acid chain; its full sequence is DNA gyrase subunit B (643 aa).

The Toprim domain occupies 428–542 (SEIFLVEGDS…AGYVYIAQPP (115 aa)). 3 residues coordinate Mg(2+): Glu434, Asp507, and Asp509.

Belongs to the type II topoisomerase GyrB family. In terms of assembly, heterotetramer, composed of two GyrA and two GyrB chains. In the heterotetramer, GyrA contains the active site tyrosine that forms a transient covalent intermediate with DNA, while GyrB binds cofactors and catalyzes ATP hydrolysis. Requires Mg(2+) as cofactor. Mn(2+) is required as a cofactor. The cofactor is Ca(2+).

It is found in the cytoplasm. It carries out the reaction ATP-dependent breakage, passage and rejoining of double-stranded DNA.. Its function is as follows. A type II topoisomerase that negatively supercoils closed circular double-stranded (ds) DNA in an ATP-dependent manner to modulate DNA topology and maintain chromosomes in an underwound state. Negative supercoiling favors strand separation, and DNA replication, transcription, recombination and repair, all of which involve strand separation. Also able to catalyze the interconversion of other topological isomers of dsDNA rings, including catenanes and knotted rings. Type II topoisomerases break and join 2 DNA strands simultaneously in an ATP-dependent manner. In Staphylococcus epidermidis (strain ATCC 35984 / DSM 28319 / BCRC 17069 / CCUG 31568 / BM 3577 / RP62A), this protein is DNA gyrase subunit B.